The following is a 376-amino-acid chain: Queuine tRNA-ribosyltransferase (376 aa).

The active-site Proton acceptor is Asp89. Substrate is bound by residues 89-93 (DSGGF), Asp143, Gln194, and Gly221. Residues 252-258 (GVGTPSN) are RNA binding. The active-site Nucleophile is Asp271. Residues 276 to 280 (ARNGR) form an RNA binding; important for wobble base 34 recognition region. The Zn(2+) site is built by Cys309, Cys311, Cys314, and His340.

The protein belongs to the queuine tRNA-ribosyltransferase family. In terms of assembly, homodimer. Within each dimer, one monomer is responsible for RNA recognition and catalysis, while the other monomer binds to the replacement base PreQ1. Zn(2+) serves as cofactor.

The enzyme catalyses 7-aminomethyl-7-carbaguanine + guanosine(34) in tRNA = 7-aminomethyl-7-carbaguanosine(34) in tRNA + guanine. It functions in the pathway tRNA modification; tRNA-queuosine biosynthesis. Catalyzes the base-exchange of a guanine (G) residue with the queuine precursor 7-aminomethyl-7-deazaguanine (PreQ1) at position 34 (anticodon wobble position) in tRNAs with GU(N) anticodons (tRNA-Asp, -Asn, -His and -Tyr). Catalysis occurs through a double-displacement mechanism. The nucleophile active site attacks the C1' of nucleotide 34 to detach the guanine base from the RNA, forming a covalent enzyme-RNA intermediate. The proton acceptor active site deprotonates the incoming PreQ1, allowing a nucleophilic attack on the C1' of the ribose to form the product. After dissociation, two additional enzymatic reactions on the tRNA convert PreQ1 to queuine (Q), resulting in the hypermodified nucleoside queuosine (7-(((4,5-cis-dihydroxy-2-cyclopenten-1-yl)amino)methyl)-7-deazaguanosine). The polypeptide is Queuine tRNA-ribosyltransferase (Clostridium acetobutylicum (strain ATCC 824 / DSM 792 / JCM 1419 / IAM 19013 / LMG 5710 / NBRC 13948 / NRRL B-527 / VKM B-1787 / 2291 / W)).